We begin with the raw amino-acid sequence, 318 residues long: WRKY transcription factor 28 (318 aa).

Polar residues-rich tracts occupy residues S74–Q84 and R106–S115. The interval S74–P158 is disordered. Composition is skewed to basic and acidic residues over residues E116–K126 and K148–P158. Positions S166–P231 form a DNA-binding region, WRKY.

This sequence belongs to the WRKY group II-c family.

The protein resides in the nucleus. Its function is as follows. Transcription factor. Interacts specifically with the W box (5'-(T)TGAC[CT]-3'), a frequently occurring elicitor-responsive cis-acting element. The protein is WRKY transcription factor 28 (WRKY28) of Arabidopsis thaliana (Mouse-ear cress).